Here is a 916-residue protein sequence, read N- to C-terminus: Protein O-GlcNAcase (916 aa).

Residues 1-50 (MVQKESQAALEERESERNANPASVSGASLEPSAAPAPGEDNPSGAGAAAG) are disordered. In terms of domain architecture, GH84 spans 60–336 (FLCGVVEGFY…TLATWYKSNM (277 aa)). A protein is bound by residues glycine 67, lysine 98, and aspartate 174. The Proton donor role is filled by aspartate 175. Residues tyrosine 219, 278-280 (WDN), aspartate 285, and asparagine 313 each bind a protein. Phosphoserine is present on serine 364. A disordered region spans residues 440 to 480 (QGAALSGEPSALTKEEEKKQPDEEPMDMVVEKQEESEHKSD). Composition is skewed to basic and acidic residues over residues 452–461 (TKEEEKKQPD) and 468–480 (VVEKQEESEHKSD).

Belongs to the glycosyl hydrolase 84 family. As to quaternary structure, monomer. Interacts with CLOCK. Post-translationally, proteolytically cleaved by caspase-3 during apoptosis. The fragments interact with each other; cleavage does not decrease enzyme activity. In terms of tissue distribution, detected in spleen (at protein level). Ubiquitous. Expressed at highest levels in the brain and spleen.

The protein resides in the nucleus. It localises to the cytoplasm. The enzyme catalyses 3-O-(N-acetyl-beta-D-glucosaminyl)-L-seryl-[protein] + H2O = N-acetyl-D-glucosamine + L-seryl-[protein]. It catalyses the reaction 3-O-(N-acetyl-beta-D-glucosaminyl)-L-threonyl-[protein] + H2O = L-threonyl-[protein] + N-acetyl-D-glucosamine. Inhibited by Cu(2+), Hg(2+), Cd(2+) and Zn(2+) at 1 mM. Not inhibited by Co(2+), Mg(2+), Ca(2+), Mn(2+), Fe(3+) and EDTA. Also inhibited by sodium chloride at 1M and 2-amino-2-hydroxymethyl-1,3-propanediol (trishydroxymethylaminomethane) at 75 mM. In terms of biological role, cleaves GlcNAc but not GalNAc from O-glycosylated proteins. Deglycosylates a large and diverse number of proteins, such as CRYAB, ELK1, GSDMD, LMNB1 and TAB1. Can use p-nitrophenyl-beta-GlcNAc and 4-methylumbelliferone-GlcNAc as substrates but not p-nitrophenyl-beta-GalNAc or p-nitrophenyl-alpha-GlcNAc (in vitro). Does not bind acetyl-CoA and does not have histone acetyltransferase activity. Its function is as follows. Lacks enzyme activity. The polypeptide is Protein O-GlcNAcase (Rattus norvegicus (Rat)).